The chain runs to 970 residues: MAEAFIQVLLDNLTSFLKGELVLLFGFQDEFQRLSSMFSTIQAVLEDAQEKQLNNKPLENWLQKLNAATYEVDDILDEYKTKATRFSQSEYGRYHPKVIPFRHKVGKRMDQVMKKLKAIAEERKNFHLHEKIVERQAVRRETGSVLTEPQVYGRDKEKDEIVKILINNVSDAQHLSVLPILGMGGLGKTTLAQMVFNDQRVTEHFHSKIWICVSEDFDEKRLIKAIVESIEGRPLLGEMDLAPLQKKLQELLNGKRYLLVLDDVWNEDQQKWANLRAVLKVGASGASVLTTTRLEKVGSIMGTLQPYELSNLSQEDCWLLFMQRAFGHQEEINPNLVAIGKEIVKKSGGVPLAAKTLGGILCFKREERAWEHVRDSPIWNLPQDESSILPALRLSYHQLPLDLKQCFAYCAVFPKDAKMEKEKLISLWMAHGFLLSKGNMELEDVGDEVWKELYLRSFFQEIEVKDGKTYFKMHDLIHDLATSLFSANTSSSNIREINKHSYTHMMSIGFAEVVFFYTLPPLEKFISLRVLNLGDSTFNKLPSSIGDLVHLRYLNLYGSGMRSLPKQLCKLQNLQTLDLQYCTKLCCLPKETSKLGSLRNLLLDGSQSLTCMPPRIGSLTCLKTLGQFVVGRKKGYQLGELGNLNLYGSIKISHLERVKNDKDAKEANLSAKGNLHSLSMSWNNFGPHIYESEEVKVLEALKPHSNLTSLKIYGFRGIHLPEWMNHSVLKNIVSILISNFRNCSCLPPFGDLPCLESLELHWGSADVEYVEEVDIDVHSGFPTRIRFPSLRKLDIWDFGSLKGLLKKEGEEQFPVLEEMIIHECPFLTLSSNLRALTSLRICYNKVATSFPEEMFKNLANLKYLTISRCNNLKELPTSLASLNALKSLKIQLCCALESLPEEGLEGLSSLTELFVEHCNMLKCLPEGLQHLTTLTSLKIRGCPQLIKRCEKGIGEDWHKISHIPNVNIYI.

The 304-residue stretch at 135-438 (RQAVRRETGS…MAHGFLLSKG (304 aa)) folds into the NB-ARC domain. 182 to 189 (GMGGLGKT) is an ATP binding site. LRR repeat units lie at residues 525 to 548 (FISL…IGDL), 550 to 571 (HLRY…LCKL), 573 to 594 (NLQT…ETSK), 595 to 619 (LGSL…IGSL), 638 to 662 (LGEL…KNDK), 672 to 697 (KGNL…EVKV), 752 to 777 (LPCL…DIDV), 787 to 811 (FPSL…EGEE), 813 to 832 (FPVL…LSSN), 833 to 857 (LRAL…MFKN), 859 to 882 (ANLK…LASL), 884 to 906 (ALKS…GLEG), 907 to 931 (LSSL…LQHL), and 946 to 970 (IKRC…NIYI).

The protein belongs to the disease resistance NB-LRR family.

Disease resistance protein. Resistance proteins guard the plant against pathogens that contain an appropriate avirulence protein via a direct or indirect interaction with this avirulence protein. That triggers a defense system which restricts the pathogen growth. Confers a broad resistance to all known races of P.infestans. The chain is Disease resistance protein RGA2 (RGA2) from Solanum bulbocastanum (Wild potato).